The following is a 249-amino-acid chain: Sugar fermentation stimulation protein homolog (249 aa).

The protein belongs to the SfsA family.

This Rhizobium rhizogenes (strain K84 / ATCC BAA-868) (Agrobacterium radiobacter) protein is Sugar fermentation stimulation protein homolog.